Here is a 93-residue protein sequence, read N- to C-terminus: DNA-directed RNA polymerase subunit Rpo11 (93 aa).

Belongs to the archaeal Rpo11/eukaryotic RPB11/RPC19 RNA polymerase subunit family. Part of the RNA polymerase complex.

It localises to the cytoplasm. It carries out the reaction RNA(n) + a ribonucleoside 5'-triphosphate = RNA(n+1) + diphosphate. DNA-dependent RNA polymerase (RNAP) catalyzes the transcription of DNA into RNA using the four ribonucleoside triphosphates as substrates. The polypeptide is DNA-directed RNA polymerase subunit Rpo11 (Methanocella arvoryzae (strain DSM 22066 / NBRC 105507 / MRE50)).